Here is a 106-residue protein sequence, read N- to C-terminus: Tripartite terminase subunit 2 (106 aa).

The protein belongs to the herpesviridae TRM2 protein family. In terms of assembly, associates with TRM1 and TRM3 to form the tripartite terminase complex.

Its subcellular location is the host nucleus. Its function is as follows. Component of the molecular motor that translocates viral genomic DNA in empty capsid during DNA packaging. Forms a tripartite terminase complex together with TRM1 and TRM3 in the host cytoplasm. Once the complex reaches the host nucleus, it interacts with the capsid portal vertex. This portal forms a ring in which genomic DNA is translocated into the capsid. This is Tripartite terminase subunit 2 from Homo sapiens (Human).